The primary structure comprises 306 residues: Glutaminase (306 aa).

Substrate-binding residues include serine 64, asparagine 115, glutamate 159, asparagine 166, tyrosine 190, tyrosine 242, and valine 260.

Belongs to the glutaminase family. As to quaternary structure, homotetramer.

The enzyme catalyses L-glutamine + H2O = L-glutamate + NH4(+). The sequence is that of Glutaminase from Aeromonas hydrophila subsp. hydrophila (strain ATCC 7966 / DSM 30187 / BCRC 13018 / CCUG 14551 / JCM 1027 / KCTC 2358 / NCIMB 9240 / NCTC 8049).